The sequence spans 827 residues: MSMSHLYGTDGEDGVEMENFEVSDWDLQNEFNPHRHRHRQTKEEATYGVWAERDSDEERPSFGGKRSRDYSAPVNFISAGLKKSAAEDVSDEDSDEDEKPVKQEEIPKEFVPKKLKTGGNFKPSQKGFVGGTKSFMDFGSWERHTKGIGQKLLQKMGYVPGRGLGKNAQGIINPIEAKQRKGKGAVGAYGSERTSQSLQDFPVVDSEEEAEEEFQKELSQWRKDPNGGKKKPKYSYKTVEELKAKGRINKQLSTPQKELSQVKVIDMTGREQKVYYSYSQISHKHNIPDDNPQQLLGKDSKPQGFALPELEHNLQLLIDITEQEIIQSDRQLQYERDMVVNLTHEIQKMSEILSHEETAISNLSKVLDMVEECERRMQPSCENPLTLDECAKIFETLQDKYYEEYRMSDRVDLAVAIVYPLMKDYFKNWDPLKDCTYGTEIIAKWKSLLENDQLLSHGGQDLSTDAFHRLMWEIWMPYVRNIVAQWQPRNCGSMVDFLDSWVHIIPVWILDNILDQLIFPKLQKEVENWNPLTDTVPIHSWIHPWLPLMQARLEPLYSPIRNKLANALQKWHPSDSSAKLILQPWKDVFTPGSWEAFMVKNIVPKLGMCLNELIINPHQQHMDAFYWVIDWEGMISVSSLVGLLEKHFFPKWLQVLCSWLSNSPNYEEITKWYLGWKSMFSDQVLAHPSIKDKFNEALDIMNRAVSSSVGGYMQPGARENIAYLTHTERRKDFQYEAMQERREAENMAQRGIGMAASSVPMNFKDLIQTKAEEHNIVFMPVIGKRHEGKQLYTFGRIVIYIDRGVVFVQGEKTWVPTSLQSLIDMAK.

Disordered regions lie at residues 31–129 (FNPH…KGFV) and 179–203 (QRKG…DFPV). The segment covering 41-60 (TKEEATYGVWAERDSDEERP) has biased composition (basic and acidic residues). Acidic residues predominate over residues 88–98 (DVSDEDSDEDE). Residues 99–112 (KPVKQEEIPKEFVP) show a composition bias toward basic and acidic residues. Residues 145-191 (TKGIGQKLLQKMGYVPGRGLGKNAQGIINPIEAKQRKGKGAVGAYGS) enclose the G-patch domain.

It belongs to the TFP11/STIP family. Identified in the spliceosome C complex.

The protein resides in the nucleus. Functionally, involved in pre-mRNA splicing, specifically in spliceosome disassembly during late-stage splicing events. This chain is Tuftelin-interacting protein 11 (TFIP11), found in Gallus gallus (Chicken).